The chain runs to 360 residues: Phospho-N-acetylmuramoyl-pentapeptide-transferase (360 aa).

10 helical membrane passes run 21-41 (YVTF…LWWG), 74-94 (MGGI…GDLG), 97-117 (YVWV…IDDY), 135-155 (ILQS…ADTV), 168-188 (IMPQ…VGSS), 199-219 (GLAI…AYLS), 236-256 (AGEL…FLWF), 263-283 (VFMG…IAVL), 288-308 (ILLV…ILQV), and 338-358 (VIVR…ATLK).

The protein belongs to the glycosyltransferase 4 family. MraY subfamily. It depends on Mg(2+) as a cofactor.

The protein localises to the cell inner membrane. The enzyme catalyses UDP-N-acetyl-alpha-D-muramoyl-L-alanyl-gamma-D-glutamyl-meso-2,6-diaminopimeloyl-D-alanyl-D-alanine + di-trans,octa-cis-undecaprenyl phosphate = di-trans,octa-cis-undecaprenyl diphospho-N-acetyl-alpha-D-muramoyl-L-alanyl-D-glutamyl-meso-2,6-diaminopimeloyl-D-alanyl-D-alanine + UMP. Its pathway is cell wall biogenesis; peptidoglycan biosynthesis. Its function is as follows. Catalyzes the initial step of the lipid cycle reactions in the biosynthesis of the cell wall peptidoglycan: transfers peptidoglycan precursor phospho-MurNAc-pentapeptide from UDP-MurNAc-pentapeptide onto the lipid carrier undecaprenyl phosphate, yielding undecaprenyl-pyrophosphoryl-MurNAc-pentapeptide, known as lipid I. The chain is Phospho-N-acetylmuramoyl-pentapeptide-transferase from Shewanella violacea (strain JCM 10179 / CIP 106290 / LMG 19151 / DSS12).